Reading from the N-terminus, the 271-residue chain is Tetraspanin-11 (271 aa).

The Cytoplasmic portion of the chain corresponds to 1-7 (MFRVSNF). Residues 8-28 (MVGLANTLVMLVGASAIGYSI) form a helical membrane-spanning segment. Over 29–44 (YMFVHQGVTDCESAIR) the chain is Extracellular. Residues 45 to 65 (IPLLTTGLILFLVSLLGVIGS) traverse the membrane as a helical segment. Residues 66 to 76 (CFKENLAMVSY) lie on the Cytoplasmic side of the membrane. A helical membrane pass occupies residues 77–97 (LIILFGGIVALMIFSIFLFFV). Residues 98 to 236 (TNKGAGRVVS…LANIREKWRN (139 aa)) lie on the Extracellular side of the membrane. N185 and N195 each carry an N-linked (GlcNAc...) asparagine glycan. The helical transmembrane segment at 237 to 257 (LLVFNICLLILLITVYSCGCC) threads the bilayer. The Cytoplasmic segment spans residues 258–271 (ARRNNRTARKSDSV).

Belongs to the tetraspanin (TM4SF) family.

It is found in the membrane. May be involved in the regulation of cell differentiation. The polypeptide is Tetraspanin-11 (TET11) (Arabidopsis thaliana (Mouse-ear cress)).